The following is a 282-amino-acid chain: MKLYKAKNTLSERHVQADRTADAKVPDDLWRTCPKCQRTLFAAQMDEYATCPGCGYGFRISANQRLSWLVDSAVPMDTALQTQDPLNFPGYEGKLKKAQEKSGLNDSVWTGRARIGDVDFNLGIMDPTFIMGSLGTITGEKITRLFEDATKNQRPVVLFTASGGARMQEGIMSLMQMAKVSTAIAEHDAAGLLYIVVLTDPTTGGVTASFAMEGDVILAEPRALVGFAGRRVIEQTTHTEIPADLQDAENVLKHGFIDHIVTRQDEKTTLAWLMKYGGKQND.

Residues 29–282 enclose the CoA carboxyltransferase N-terminal domain; sequence LWRTCPKCQR…LMKYGGKQND (254 aa). Residues Cys-33, Cys-36, Cys-51, and Cys-54 each contribute to the Zn(2+) site. A C4-type zinc finger spans residues 33–54; it reads CPKCQRTLFAAQMDEYATCPGC.

The protein belongs to the AccD/PCCB family. In terms of assembly, acetyl-CoA carboxylase is a heterohexamer composed of biotin carboxyl carrier protein (AccB), biotin carboxylase (AccC) and two subunits each of ACCase subunit alpha (AccA) and ACCase subunit beta (AccD). Zn(2+) serves as cofactor.

The protein localises to the cytoplasm. It catalyses the reaction N(6)-carboxybiotinyl-L-lysyl-[protein] + acetyl-CoA = N(6)-biotinyl-L-lysyl-[protein] + malonyl-CoA. It functions in the pathway lipid metabolism; malonyl-CoA biosynthesis; malonyl-CoA from acetyl-CoA: step 1/1. Functionally, component of the acetyl coenzyme A carboxylase (ACC) complex. Biotin carboxylase (BC) catalyzes the carboxylation of biotin on its carrier protein (BCCP) and then the CO(2) group is transferred by the transcarboxylase to acetyl-CoA to form malonyl-CoA. The chain is Acetyl-coenzyme A carboxylase carboxyl transferase subunit beta from Limosilactobacillus fermentum (strain NBRC 3956 / LMG 18251) (Lactobacillus fermentum).